The sequence spans 265 residues: tRNA pseudouridine synthase A (265 aa).

Catalysis depends on aspartate 53, which acts as the Nucleophile. Tyrosine 111 is a substrate binding site.

Belongs to the tRNA pseudouridine synthase TruA family. As to quaternary structure, homodimer.

The catalysed reaction is uridine(38/39/40) in tRNA = pseudouridine(38/39/40) in tRNA. Functionally, formation of pseudouridine at positions 38, 39 and 40 in the anticodon stem and loop of transfer RNAs. The chain is tRNA pseudouridine synthase A from Acinetobacter baumannii (strain ACICU).